Here is a 1040-residue protein sequence, read N- to C-terminus: Regulator of telomere elongation helicase 1 homolog (1040 aa).

Residues Arg-52 to Leu-355 form the Helicase ATP-binding domain. Ser-87–Thr-94 contacts ATP. The disordered stretch occupies residues Arg-117 to Gly-137. [4Fe-4S] cluster is bound by residues Cys-181, Cys-202, Cys-210, and Cys-246. The DEAH box signature appears at Asp-289 to His-292. The disordered stretch occupies residues Lys-926–Lys-949. A compositionally biased stretch (polar residues) spans Ser-930–Leu-939. The PIP-box; degenerate motif lies at Gln-992 to Cys-999.

This sequence belongs to the helicase family. RAD3/XPD subfamily.

Its subcellular location is the nucleus. It carries out the reaction ATP + H2O = ADP + phosphate + H(+). Its function is as follows. A probable ATP-dependent DNA helicase implicated in DNA replication, DNA repair and the maintenance of genomic stability. Acts as an anti-recombinase to counteract toxic recombination and limit crossover during meiosis. Regulates meiotic recombination and crossover homeostasis by physically dissociating strand invasion events and thereby promotes noncrossover repair by meiotic synthesis dependent strand annealing (SDSA) as well as disassembly of D loop recombination intermediates. Also plays a role in preserving the stability of 45S rDNA repeats. This Arabidopsis thaliana (Mouse-ear cress) protein is Regulator of telomere elongation helicase 1 homolog.